A 219-amino-acid chain; its full sequence is GTP-binding nuclear protein GSP1/CNR1 (219 aa).

Position 2 is an N-acetylserine (Ser2). A Phosphoserine modification is found at Ser2. Residues Glu9–Asn173 enclose the Small GTPase Ran-type domain. Asp20 to Thr27 is a binding site for GTP. The segment at Lys39–Val47 is switch-I. Residues Gly70, Asn124–Asp127, and Ser152–Lys154 contribute to the GTP site. Residues Gly70–Gln86 form a switch-II region.

Belongs to the small GTPase superfamily. Ran family. As to quaternary structure, found in a nuclear export complex with RanGTP, exportin and pre-miRNA. Forms a complex with YRB1. Interacts with BUD5, CEX1, RRP12, SRM1, and DIS3/RRP44.

It localises to the nucleus. Functionally, GTP-binding protein involved in nucleocytoplasmic transport. Required for the import of protein into the nucleus and also for RNA export. Essential for cell viability. By analogy with Ras, Ran may be activated when GTP is exchanged for bound GDP by RCC1 and inactivated when GTP is hydrolyzed by Ran upon activation by RanGAP1. The protein is GTP-binding nuclear protein GSP1/CNR1 (GSP1) of Saccharomyces cerevisiae (strain ATCC 204508 / S288c) (Baker's yeast).